Reading from the N-terminus, the 549-residue chain is Alpha-amylase (549 aa).

The signal sequence occupies residues 1-34 (MLTFHRIIRKGWMFLLAFLLTALLFCPTGQPAKA). Residues D139, D196, A218, D220, D231, and D237 each contribute to the Ca(2+) site. D196 serves as a coordination point for Na(+). 4 residues coordinate Na(+): D220, D231, D237, and L238. D239 provides a ligand contact to Ca(2+). D268 functions as the Nucleophile in the catalytic mechanism. H272 contributes to the Ca(2+) binding site. The Proton donor role is filled by E298. Positions 337, 339, 440, 441, and 464 each coordinate Ca(2+).

This sequence belongs to the glycosyl hydrolase 13 family. As to quaternary structure, monomer. Ca(2+) serves as cofactor. Requires Na(+) as cofactor.

Its subcellular location is the secreted. The enzyme catalyses Endohydrolysis of (1-&gt;4)-alpha-D-glucosidic linkages in polysaccharides containing three or more (1-&gt;4)-alpha-linked D-glucose units.. The sequence is that of Alpha-amylase (amyS) from Geobacillus stearothermophilus (Bacillus stearothermophilus).